The primary structure comprises 272 residues: MSGFEQLFAGKLPKLIMFDLDGTLVDSVPDLAVAVDTMLAELGRPIAGLESVRAWVGNGAPVLVRRALANNLDHSGVDDALAEQGLEIFMRAYAQKHEFTVVYPGVRETLKWLQKMGVEMALITNKPERFVAPLLDEMKLGRFFRWIVGGDTMPQKKPDPAALFFVMKMAGAPASQSLFVGDSRSDVQAAKAAGVACVALSYGYNHGRPIAEENPAMVIDDLRKLIPGCLDMDAEILLPDIKRPSSRESIVVVTRKLWMKVIKALARWRWRA.

D19 serves as the catalytic Nucleophile. Mg(2+) contacts are provided by D19, D21, and D182.

The protein belongs to the HAD-like hydrolase superfamily. CbbY/CbbZ/Gph/YieH family. Mg(2+) is required as a cofactor.

It catalyses the reaction 2-phosphoglycolate + H2O = glycolate + phosphate. The protein operates within organic acid metabolism; glycolate biosynthesis; glycolate from 2-phosphoglycolate: step 1/1. Its function is as follows. Specifically catalyzes the dephosphorylation of 2-phosphoglycolate. Is involved in the dissimilation of the intracellular 2-phosphoglycolate formed during the DNA repair of 3'-phosphoglycolate ends, a major class of DNA lesions induced by oxidative stress. This chain is Phosphoglycolate phosphatase, found in Pseudomonas syringae pv. syringae (strain B728a).